The following is a 270-amino-acid chain: 5'-nucleotidase SurE (270 aa).

Residues Asp-14, Asp-15, Ser-46, and Asn-104 each contribute to the a divalent metal cation site.

The protein belongs to the SurE nucleotidase family. Requires a divalent metal cation as cofactor.

Its subcellular location is the cytoplasm. The catalysed reaction is a ribonucleoside 5'-phosphate + H2O = a ribonucleoside + phosphate. In terms of biological role, nucleotidase that shows phosphatase activity on nucleoside 5'-monophosphates. This chain is 5'-nucleotidase SurE, found in Microcystis aeruginosa (strain NIES-843 / IAM M-2473).